A 311-amino-acid chain; its full sequence is Apolipoprotein E (311 aa).

The N-terminal stretch at 1–18 is a signal peptide; sequence MKALWAVLLVTLLTGCLA. Tandem repeats lie at residues 72–93, 94–115, 116–137, 138–159, 160–181, 182–203, 204–225, and 226–247. The interval 72–247 is 8 X 22 AA approximate tandem repeats; that stretch reads ALMEDTMTEV…RLEEVREHME (176 aa). Methionine 135 carries the post-translational modification Methionine sulfoxide. Serine 139 is modified (phosphoserine). Residues 150-160 form an LDL and other lipoprotein receptors binding region; the sequence is HLRKMRKRLMR. Heparin is bound at residue 154-157; it reads MRKR. Residues 202-282 form a lipid-binding and lipoprotein association region; it reads TANLGAGAAQ…GWFEPIVEDM (81 aa). Position 221 to 228 (221 to 228) interacts with heparin; the sequence is GDRIRGRL. Positions 258–311 are homooligomerization; it reads QQIRLQAEIFQARLKGWFEPIVEDMHRQWANLMEKIQASVATNPIITPVAQENQ. Residues 270-282 are specificity for association with VLDL; sequence RLKGWFEPIVEDM.

This sequence belongs to the apolipoprotein A1/A4/E family. As to quaternary structure, homotetramer. May interact with ABCA1; functionally associated with ABCA1 in the biogenesis of HDLs. May interact with APP/A4 amyloid-beta peptide; the interaction is extremely stable in vitro but its physiological significance is unclear. May interact with MAPT. May interact with MAP2. In the cerebrospinal fluid, interacts with secreted SORL1. Interacts with PMEL; this allows the loading of PMEL luminal fragment on ILVs to induce fibril nucleation. Post-translationally, APOE exists as multiple glycosylated and sialylated glycoforms within cells and in plasma. The extent of glycosylation and sialylation are tissue and context specific. In terms of processing, glycated in plasma VLDL. Phosphorylated by FAM20C in the extracellular medium.

It localises to the secreted. The protein resides in the extracellular space. Its subcellular location is the extracellular matrix. It is found in the extracellular vesicle. The protein localises to the endosome. It localises to the multivesicular body. Functionally, APOE is an apolipoprotein, a protein associating with lipid particles, that mainly functions in lipoprotein-mediated lipid transport between organs via the plasma and interstitial fluids. APOE is a core component of plasma lipoproteins and is involved in their production, conversion and clearance. Apolipoproteins are amphipathic molecules that interact both with lipids of the lipoprotein particle core and the aqueous environment of the plasma. As such, APOE associates with chylomicrons, chylomicron remnants, very low density lipoproteins (VLDL) and intermediate density lipoproteins (IDL) but shows a preferential binding to high-density lipoproteins (HDL). It also binds a wide range of cellular receptors including the LDL receptor/LDLR and the very low-density lipoprotein receptor/VLDLR that mediate the cellular uptake of the APOE-containing lipoprotein particles. Finally, APOE also has a heparin-binding activity and binds heparan-sulfate proteoglycans on the surface of cells, a property that supports the capture and the receptor-mediated uptake of APOE-containing lipoproteins by cells. In Mus musculus (Mouse), this protein is Apolipoprotein E (Apoe).